A 483-amino-acid chain; its full sequence is MARAIMFQGTGSDVGKSVLVAGLCRVARNRGLNVRPFKPQNMSNNAAVSDDGGEIGRAQWLQALACGVPSSVHMNPVLLKPQTDMGSQVIVQGQVRGEARGRYYQELKPQLMAAVMESFARVSEGADLVLVEGAGSPAEINLRAGDIANMGFATQADVPVVLVGDIDRGGVIASLVGTHTILSEQDRAMVRGFLINKFRGDISLFDDGLAAITRFTGWRSFGVVPWLKAVSRLPAEDSVVLERAVRGDKKSLVVAVPMLPRIANFDDLDPLKAEPDVEVVMVPPGSSIPGDAGLVVLPGTKSTIADMQAVRDNGWDRQLSAHVKRGGHVLGICGGFQMLGHHISDPAGIEGHVRDIDGLGLLDIETVMEPEKVVRNVQATALLHNVPLEGYEIHIGRTTGPDMGWPFARIGEHDDGAISPDGRIMGTYLHGVFNADEFRRRFLQNLGVQSSSVNYRAGVEAALDELAEGLEACLDIDALFNLK.

In terms of domain architecture, GATase cobBQ-type spans 251–438; the sequence is SLVVAVPMLP…LHGVFNADEF (188 aa). Catalysis depends on Cys333, which acts as the Nucleophile. Residue His430 is part of the active site.

It belongs to the CobB/CobQ family. CobQ subfamily.

Its pathway is cofactor biosynthesis; adenosylcobalamin biosynthesis. Its function is as follows. Catalyzes amidations at positions B, D, E, and G on adenosylcobyrinic A,C-diamide. NH(2) groups are provided by glutamine, and one molecule of ATP is hydrogenolyzed for each amidation. The sequence is that of Cobyric acid synthase from Brucella anthropi (strain ATCC 49188 / DSM 6882 / CCUG 24695 / JCM 21032 / LMG 3331 / NBRC 15819 / NCTC 12168 / Alc 37) (Ochrobactrum anthropi).